The following is a 290-amino-acid chain: Thymidylate synthase (290 aa).

Residue Arg31 participates in dUMP binding. His61 serves as a coordination point for (6R)-5,10-methylene-5,6,7,8-tetrahydrofolate. Arg152–Arg153 is a binding site for dUMP. Cys172 functions as the Nucleophile in the catalytic mechanism. DUMP contacts are provided by residues Arg192–Asp195, Asn203, and His233–Tyr235. Asp195 lines the (6R)-5,10-methylene-5,6,7,8-tetrahydrofolate pocket. Ala289 is a (6R)-5,10-methylene-5,6,7,8-tetrahydrofolate binding site.

The protein belongs to the thymidylate synthase family. Bacterial-type ThyA subfamily. As to quaternary structure, homodimer.

Its subcellular location is the cytoplasm. It carries out the reaction dUMP + (6R)-5,10-methylene-5,6,7,8-tetrahydrofolate = 7,8-dihydrofolate + dTMP. Its pathway is pyrimidine metabolism; dTTP biosynthesis. Its function is as follows. Catalyzes the reductive methylation of 2'-deoxyuridine-5'-monophosphate (dUMP) to 2'-deoxythymidine-5'-monophosphate (dTMP) while utilizing 5,10-methylenetetrahydrofolate (mTHF) as the methyl donor and reductant in the reaction, yielding dihydrofolate (DHF) as a by-product. This enzymatic reaction provides an intracellular de novo source of dTMP, an essential precursor for DNA biosynthesis. This is Thymidylate synthase from Psychrobacter cryohalolentis (strain ATCC BAA-1226 / DSM 17306 / VKM B-2378 / K5).